We begin with the raw amino-acid sequence, 657 residues long: MSASHKNLHSKLSIGGLLITLGIIYGDIGTSPLYVMKAILGNHTINADIVLGGISCVFWTLTLQTTIKYVLITLSADNHGEGGIFALYALVKKTKIQWLIVPAIIGGSALLADGIITPPISISSAVEGIRAFYPTMQTQTIVYIVITILFILFTIQQFGTKLVGKFFAPMMLIWFAMLGTLGFIQIMHFPEVIKAINPYYAYHLLSVHPDGFFVLGFVFLCTTGAEALYSDMGHCGRKNIRISWIFVKTTLVLNYFGQAAYLIHHEGSTLQQLGGENGNPFYLIMPHWFLPFGIVVATLAAVIASQALISGSFTLINEAMRLNFWPKVKIKYPTEVKGQLYIPSINWLLFFGCVGIVLHFEKSGNMEHAYGLAIILCMIMTTILLNYYLIMKRVKLYFMVPLITIYLLIEFSFLIANITKFAEGGYVTLIIAILLISIMTIWYLAKKINKNYTKVIKIDDYKKVLMELSEDLSIPKYATHLVYMTNANSVDELEEKVIYSILQKRPKRADIYWFVHVNILTEPYKTQYKVTEIAKDDIYRIDFNLGFREPTKINLMFREVIRDMVKRGEVDITSRYESLNKNNIIGDFKFVLSEKFLSNDNDLRWHENIIMNSYFFIKKLSLSEERAFGLDSSSVKIEKFPMVLHAPENIGLTRITK.

12 helical membrane passes run 14–34 (IGGLLITLGIIYGDIGTSPLY), 47–67 (ADIVLGGISCVFWTLTLQTTI), 96–116 (IQWLIVPAIIGGSALLADGII), 140–160 (TIVYIVITILFILFTIQQFGT), 166–186 (FFAPMMLIWFAMLGTLGFIQI), 201–221 (AYHLLSVHPDGFFVLGFVFLC), 242–262 (ISWIFVKTTLVLNYFGQAAYL), 283–303 (LIMPHWFLPFGIVVATLAAVI), 340–360 (LYIPSINWLLFFGCVGIVLHF), 371–391 (GLAIILCMIMTTILLNYYLIM), 396–416 (LYFMVPLITIYLLIEFSFLIA), and 425–445 (GYVTLIIAILLISIMTIWYLA).

It belongs to the HAK/KUP transporter (TC 2.A.72) family.

It localises to the cell inner membrane. The enzyme catalyses K(+)(in) + H(+)(in) = K(+)(out) + H(+)(out). Its function is as follows. Transport of potassium into the cell. Likely operates as a K(+):H(+) symporter. This is Probable potassium transport system protein Kup from Flavobacterium johnsoniae (strain ATCC 17061 / DSM 2064 / JCM 8514 / BCRC 14874 / CCUG 350202 / NBRC 14942 / NCIMB 11054 / UW101) (Cytophaga johnsonae).